Reading from the N-terminus, the 71-residue chain is Protein translocase subunit SecE (71 aa).

Residues 43–63 (VAGAGILAVGAIGFIIYVLLT) form a helical membrane-spanning segment.

This sequence belongs to the SecE/SEC61-gamma family. Component of the Sec protein translocase complex. Heterotrimer consisting of SecY (alpha), SecG (beta) and SecE (gamma) subunits. The heterotrimers can form oligomers, although 1 heterotrimer is thought to be able to translocate proteins. Interacts with the ribosome. May interact with SecDF, and other proteins may be involved.

Its subcellular location is the cell membrane. Its function is as follows. Essential subunit of the Sec protein translocation channel SecYEG. Clamps together the 2 halves of SecY. May contact the channel plug during translocation. This chain is Protein translocase subunit SecE, found in Methanosarcina acetivorans (strain ATCC 35395 / DSM 2834 / JCM 12185 / C2A).